We begin with the raw amino-acid sequence, 373 residues long: tRNA-specific 2-thiouridylase MnmA (373 aa).

ATP is bound by residues 12-19 (GMSGGVDS) and methionine 38. The interaction with target base in tRNA stretch occupies residues 98–100 (NPD). Cysteine 103 acts as the Nucleophile in catalysis. The cysteines at positions 103 and 200 are disulfide-linked. Residue glycine 127 participates in ATP binding. Positions 150–152 (KDQ) are interaction with tRNA. Residue cysteine 200 is the Cysteine persulfide intermediate of the active site. The interval 312 to 313 (RY) is interaction with tRNA.

This sequence belongs to the MnmA/TRMU family.

It localises to the cytoplasm. It carries out the reaction S-sulfanyl-L-cysteinyl-[protein] + uridine(34) in tRNA + AH2 + ATP = 2-thiouridine(34) in tRNA + L-cysteinyl-[protein] + A + AMP + diphosphate + H(+). Its function is as follows. Catalyzes the 2-thiolation of uridine at the wobble position (U34) of tRNA, leading to the formation of s(2)U34. This is tRNA-specific 2-thiouridylase MnmA from Streptococcus pneumoniae (strain CGSP14).